A 391-amino-acid polypeptide reads, in one-letter code: Probable tRNA sulfurtransferase (391 aa).

The THUMP domain maps to 60–167 (DETVAALQRV…NKAYVYSNTL (108 aa)). ATP contacts are provided by residues 184-185 (LL), 209-210 (YF), Arg-266, Gly-288, and Gln-297.

Belongs to the ThiI family.

It localises to the cytoplasm. The catalysed reaction is [ThiI sulfur-carrier protein]-S-sulfanyl-L-cysteine + a uridine in tRNA + 2 reduced [2Fe-2S]-[ferredoxin] + ATP + H(+) = [ThiI sulfur-carrier protein]-L-cysteine + a 4-thiouridine in tRNA + 2 oxidized [2Fe-2S]-[ferredoxin] + AMP + diphosphate. It carries out the reaction [ThiS sulfur-carrier protein]-C-terminal Gly-Gly-AMP + S-sulfanyl-L-cysteinyl-[cysteine desulfurase] + AH2 = [ThiS sulfur-carrier protein]-C-terminal-Gly-aminoethanethioate + L-cysteinyl-[cysteine desulfurase] + A + AMP + 2 H(+). It functions in the pathway cofactor biosynthesis; thiamine diphosphate biosynthesis. Its function is as follows. Catalyzes the ATP-dependent transfer of a sulfur to tRNA to produce 4-thiouridine in position 8 of tRNAs, which functions as a near-UV photosensor. Also catalyzes the transfer of sulfur to the sulfur carrier protein ThiS, forming ThiS-thiocarboxylate. This is a step in the synthesis of thiazole, in the thiamine biosynthesis pathway. The sulfur is donated as persulfide by IscS. The chain is Probable tRNA sulfurtransferase from Lachnoclostridium phytofermentans (strain ATCC 700394 / DSM 18823 / ISDg) (Clostridium phytofermentans).